Reading from the N-terminus, the 119-residue chain is Multidrug resistance protein EbrB (119 aa).

The next 4 helical transmembrane spans lie at 3-23 (GMIFLAAAILSEVFGSTMLKL), 31-51 (LPAAGVIIGFAASFTFLSFSL), 59-79 (AYATWAGTGTALTAAIGHFIF), and 81-101 (EPFNLKTLIGLTLIIGGVFLL).

This sequence belongs to the drug/metabolite transporter (DMT) superfamily. Small multidrug resistance (SMR) (TC 2.A.7.1) family. EbrA/EbrB subfamily. As to quaternary structure, the efflux pump is composed of EbrA and EbrB.

The protein localises to the cell membrane. In terms of biological role, part of a multidrug efflux pump. Confers resistance to cationic lipophilic dyes such as ethidium bromide, acriflavine, pyronine Y and safranin O. The efflux is probably coupled to an influx of protons. This Bacillus licheniformis (strain ATCC 14580 / DSM 13 / JCM 2505 / CCUG 7422 / NBRC 12200 / NCIMB 9375 / NCTC 10341 / NRRL NRS-1264 / Gibson 46) protein is Multidrug resistance protein EbrB (ebrB).